The following is a 338-amino-acid chain: Aspartate-semialdehyde dehydrogenase (338 aa).

NADP(+) contacts are provided by residues 13-16 (TGNV) and 41-42 (SS). Arg-101 serves as a coordination point for phosphate. Cys-132 (acyl-thioester intermediate) is an active-site residue. Gln-159 is a binding site for substrate. NADP(+) is bound by residues 162 to 163 (SG) and Pro-187. Lys-216 serves as a coordination point for phosphate. Residue Arg-237 participates in substrate binding. The Proton acceptor role is filled by His-244. NADP(+) is bound at residue Asn-317.

The protein belongs to the aspartate-semialdehyde dehydrogenase family. Homodimer.

The enzyme catalyses L-aspartate 4-semialdehyde + phosphate + NADP(+) = 4-phospho-L-aspartate + NADPH + H(+). The protein operates within amino-acid biosynthesis; L-lysine biosynthesis via DAP pathway; (S)-tetrahydrodipicolinate from L-aspartate: step 2/4. It functions in the pathway amino-acid biosynthesis; L-methionine biosynthesis via de novo pathway; L-homoserine from L-aspartate: step 2/3. It participates in amino-acid biosynthesis; L-threonine biosynthesis; L-threonine from L-aspartate: step 2/5. In terms of biological role, catalyzes the NADPH-dependent formation of L-aspartate-semialdehyde (L-ASA) by the reductive dephosphorylation of L-aspartyl-4-phosphate. This Rickettsia conorii (strain ATCC VR-613 / Malish 7) protein is Aspartate-semialdehyde dehydrogenase.